We begin with the raw amino-acid sequence, 414 residues long: Serine/threonine transporter SstT (414 aa).

8 helical membrane-spanning segments follow: residues 16–36 (GSLVKQILVGLVLGILLAWIS), 46–66 (LGTLFVGALKAVAPVLVLMLV), 84–104 (ILFLYLLGTFSAALAAVVFSF), 143–163 (ALLNANYIGILVWAVGLGFAL), 180–200 (AVTFMVKLVIRFAPVGIFGLV), 219–239 (LVVLIGCMLLVALVVNPLLVF), 300–320 (MAGAAITITVLTLAAVHTLGV), and 332–352 (VVASLCACGASGVAGGSLLLI).

It belongs to the dicarboxylate/amino acid:cation symporter (DAACS) (TC 2.A.23) family.

It localises to the cell inner membrane. The enzyme catalyses L-serine(in) + Na(+)(in) = L-serine(out) + Na(+)(out). The catalysed reaction is L-threonine(in) + Na(+)(in) = L-threonine(out) + Na(+)(out). In terms of biological role, involved in the import of serine and threonine into the cell, with the concomitant import of sodium (symport system). This Salmonella newport (strain SL254) protein is Serine/threonine transporter SstT.